The following is a 229-amino-acid chain: uncharacterized protein (229 aa).

The next 7 helical transmembrane spans lie at 1 to 21, 32 to 52, 58 to 78, 100 to 120, 139 to 159, 178 to 198, and 206 to 226; these read MFGT…GGIF, ILMQ…ITQH, YPIL…IINL, TAVL…EAAL, IVLA…LFSW, LINE…LSIL, and LNLL…HAFG.

It is found in the cell membrane. This is an uncharacterized protein from Bacillus subtilis (strain 168).